Here is a 71-residue protein sequence, read N- to C-terminus: Translational regulator CsrA (71 aa).

It belongs to the CsrA/RsmA family. As to quaternary structure, homodimer; the beta-strands of each monomer intercalate to form a hydrophobic core, while the alpha-helices form wings that extend away from the core.

The protein resides in the cytoplasm. Its function is as follows. A translational regulator that binds mRNA to regulate translation initiation and/or mRNA stability. Usually binds in the 5'-UTR at or near the Shine-Dalgarno sequence preventing ribosome-binding, thus repressing translation. Its main target seems to be the major flagellin gene, while its function is anatagonized by FliW. The sequence is that of Translational regulator CsrA from Clostridium botulinum (strain Alaska E43 / Type E3).